The primary structure comprises 400 residues: Multidrug resistance protein 2 (400 aa).

Transmembrane regions (helical) follow at residues 11–31 (IFII…LIIP), 46–66 (TMGY…PFAG), 78–98 (IILG…GTHV), 106–126 (ILGG…VADI), 142–162 (AIST…GFGI), 164–184 (MPFF…VFIL), 213–233 (IHPV…GLSA), 253–273 (IAAI…LLFG), 297–317 (FVST…FIFL), 346–366 (STYT…LFDL), and 368–388 (IHYP…LTMV).

It belongs to the major facilitator superfamily. TCR/Tet family.

The protein resides in the cell membrane. Functionally, energy-dependent efflux pump responsible for decreased drug accumulation in multi-drug-resistant cells. Probably uses a transmembrane proton gradient as the energy source. Causes the efflux of a variety of toxic substances, including such structurally diverse compounds as ethidium bromide, rhodamine and acridine dyes, tetraphenylphosphonium, puromycin, chloramphenicol, doxorubicin, and fluoroquinolone antibiotics. The chain is Multidrug resistance protein 2 (blt) from Bacillus subtilis (strain 168).